A 415-amino-acid polypeptide reads, in one-letter code: Gamma-glutamyl phosphate reductase (415 aa).

It belongs to the gamma-glutamyl phosphate reductase family.

The protein localises to the cytoplasm. The enzyme catalyses L-glutamate 5-semialdehyde + phosphate + NADP(+) = L-glutamyl 5-phosphate + NADPH + H(+). It participates in amino-acid biosynthesis; L-proline biosynthesis; L-glutamate 5-semialdehyde from L-glutamate: step 2/2. Its function is as follows. Catalyzes the NADPH-dependent reduction of L-glutamate 5-phosphate into L-glutamate 5-semialdehyde and phosphate. The product spontaneously undergoes cyclization to form 1-pyrroline-5-carboxylate. This is Gamma-glutamyl phosphate reductase from Mycolicibacterium vanbaalenii (strain DSM 7251 / JCM 13017 / BCRC 16820 / KCTC 9966 / NRRL B-24157 / PYR-1) (Mycobacterium vanbaalenii).